Reading from the N-terminus, the 89-residue chain is Small ribosomal subunit protein uS17 (89 aa).

It belongs to the universal ribosomal protein uS17 family. In terms of assembly, part of the 30S ribosomal subunit.

One of the primary rRNA binding proteins, it binds specifically to the 5'-end of 16S ribosomal RNA. The polypeptide is Small ribosomal subunit protein uS17 (Polaromonas naphthalenivorans (strain CJ2)).